We begin with the raw amino-acid sequence, 1009 residues long: MDMFSLDMIISDPAAEASRAGKKQLRGVQNPCPSARARPRHKSLNIKDKISEWEGKKEVPTPAPSRRADGQEDYLPSSTVERRSSDGVRTQVTEAKNGMRPGTESTEKERNKGAVNVGGQDPEPGQDLSQPEREVDPSWGRGREPRLGKLRFQNDPLSVLKQVKKLEQALKDGSAGLDPQLPGTCYSPHCPPDKAEAGSTLPENLGGGSGSEVSQRVHPSDLEGREPTPELVEDRKGSCRRPWDRSLENVYRGSEGSPTKPFINPLPKPRRTFKHAGEGDKDGKPGIGFRKEKRNLPPLPSLPPPPLPSSPPPSSVNRRLWTGRQKSSADHRKSYEFEDLLQSSSESSRVDWYAQTKLGLTRTLSEENVYEDILDPPMKENPYEDIELHGRCLGKKCVLNFPASPTSSIPDTLTKQSLSKPAFFRQNSERRNFKLLDTRKLSRDGTGSPSKISPPSTPSSPDDIFFNLGDPQNGRKKRKIPKLVLRINAIYEVRRGKKRVKRLSQSMESNSGKVTDENSESDSDTEEKLKAHSQRLVNVKSRLKQAPRYPSLARELIEYQERQLFEYFVVVSLHKKQAGAAYVPELTQQFPLKLERSFKFMREAEDQLKAIPQFCFPDAKDWVPVQQFTSETFSFVLTGEDGSRRFGYCRRLLPGGKGKRLPEVYCIVSRLGCFSLFSRILDEVEKRRGISPALVQPLMRSVMEAPFPALGKTILVKNFLPGSGTEVIELCRPLDSRLEHVDFESLFSSLSVRHLVCVFASLLLERRVIFIADKLSILSKCCHAMVALIYPFAWQHTYIPVLPPAMVDIVCSPTPFLIGLLSSSLPLLRELPLEEVLVVDLVNSRFLRQMDDEDSILPRKLQVALEHILEQRNELACEQDEGPLDGRHGPESSPLNEVVSEAFVRFFVEIVGHYSLFLTSGEREERTLQREAFRKAVSSKSLRHFLEVFMETQMFRGFIQERELRRQDAKGLFEVRAQEYLETLPSGEHSGVNKFLKGLGNKMKFLHKK.

4 disordered regions span residues 15 to 153, 171 to 334, 434 to 479, and 498 to 532; these read AEAS…LRFQ, KDGS…HRKS, KLLD…KKRK, and KRVKRLSQSMESNSGKVTDENSESDSDTEEKLKAH. Basic and acidic residues-rich tracts occupy residues 45-59, 130-147, 218-247, and 275-284; these read NIKDKISEWEGKKEV, QPEREVDPSWGRGREPRL, HPSDLEGREPTPELVEDRKGSCRRPWDRSL, and HAGEGDKDGK. The span at 297 to 314 shows a compositional bias: pro residues; it reads PPLPSLPPPPLPSSPPPS. The span at 434–443 shows a compositional bias: basic and acidic residues; it reads KLLDTRKLSR. Residues 503 to 513 show a composition bias toward polar residues; it reads LSQSMESNSGK. Ser551 bears the Phosphoserine mark. The region spanning 566–715 is the uDENN domain; the sequence is EYFVVVSLHK…PFPALGKTIL (150 aa). In terms of domain architecture, cDENN spans 737 to 870; the sequence is RLEHVDFESL…LQVALEHILE (134 aa). The region spanning 872 to 969 is the dDENN domain; it reads RNELACEQDE…QERELRRQDA (98 aa).

The protein localises to the cytoplasm. The protein resides in the cytoskeleton. Guanine nucleotide exchange factor (GEF) which may activate RAB9A and RAB9B. Promotes the exchange of GDP to GTP, converting inactive GDP-bound Rab proteins into their active GTP-bound form. May play a role in late endosomes back to trans-Golgi network/TGN transport. This chain is DENN domain-containing protein 2A (DENND2A), found in Homo sapiens (Human).